A 422-amino-acid polypeptide reads, in one-letter code: Dihydroorotase (422 aa).

2 residues coordinate Zn(2+): H59 and H61. Substrate-binding positions include 61–63 and N93; that span reads HFR. Residues D150, H177, and H230 each coordinate Zn(2+). Residue N276 participates in substrate binding. A Zn(2+)-binding site is contributed by D303. The active site involves D303. H307 is a binding site for substrate.

It belongs to the metallo-dependent hydrolases superfamily. DHOase family. Class I DHOase subfamily. The cofactor is Zn(2+).

The enzyme catalyses (S)-dihydroorotate + H2O = N-carbamoyl-L-aspartate + H(+). The protein operates within pyrimidine metabolism; UMP biosynthesis via de novo pathway; (S)-dihydroorotate from bicarbonate: step 3/3. Catalyzes the reversible cyclization of carbamoyl aspartate to dihydroorotate. The sequence is that of Dihydroorotase from Streptococcus pyogenes serotype M1.